The primary structure comprises 422 residues: Serine--tRNA ligase (422 aa).

229-231 (TAE) provides a ligand contact to L-serine. 260–262 (RAE) lines the ATP pocket. E283 is a binding site for L-serine. 347-350 (EISS) lines the ATP pocket. Residue S383 participates in L-serine binding.

This sequence belongs to the class-II aminoacyl-tRNA synthetase family. Type-1 seryl-tRNA synthetase subfamily. In terms of assembly, homodimer. The tRNA molecule binds across the dimer.

It localises to the cytoplasm. The enzyme catalyses tRNA(Ser) + L-serine + ATP = L-seryl-tRNA(Ser) + AMP + diphosphate + H(+). The catalysed reaction is tRNA(Sec) + L-serine + ATP = L-seryl-tRNA(Sec) + AMP + diphosphate + H(+). Its pathway is aminoacyl-tRNA biosynthesis; selenocysteinyl-tRNA(Sec) biosynthesis; L-seryl-tRNA(Sec) from L-serine and tRNA(Sec): step 1/1. In terms of biological role, catalyzes the attachment of serine to tRNA(Ser). Is also able to aminoacylate tRNA(Sec) with serine, to form the misacylated tRNA L-seryl-tRNA(Sec), which will be further converted into selenocysteinyl-tRNA(Sec). The chain is Serine--tRNA ligase from Halothermothrix orenii (strain H 168 / OCM 544 / DSM 9562).